The sequence spans 181 residues: Oligoribonuclease (181 aa).

The Exonuclease domain occupies 8 to 171; that stretch reads LIWIDLEMTG…DDIRESVAEL (164 aa). Y129 is an active-site residue.

Belongs to the oligoribonuclease family.

It is found in the cytoplasm. Its function is as follows. 3'-to-5' exoribonuclease specific for small oligoribonucleotides. The protein is Oligoribonuclease of Salmonella choleraesuis (strain SC-B67).